Reading from the N-terminus, the 143-residue chain is Transmembrane protein 207 (143 aa).

The N-terminal stretch at 1 to 29 is a signal peptide; the sequence is MSTSSPFRVASKIVTAGCLCLPLFQRVLS. A helical transmembrane segment spans residues 52 to 72; that stretch reads IWFFLLIFLVVLLCGVVLFCL.

Interacts with WWOX.

It is found in the membrane. The sequence is that of Transmembrane protein 207 from Mus musculus (Mouse).